The following is a 431-amino-acid chain: UDP-N-acetylglucosamine 1-carboxyvinyltransferase (431 aa).

Residue 22–23 participates in phosphoenolpyruvate binding; that stretch reads KN. Arginine 92 is a binding site for UDP-N-acetyl-alpha-D-glucosamine. The active-site Proton donor is the aspartate 116. Residues 121 to 125, aspartate 307, and isoleucine 330 contribute to the UDP-N-acetyl-alpha-D-glucosamine site; that span reads RPIDQ.

This sequence belongs to the EPSP synthase family. MurA subfamily.

The protein resides in the cytoplasm. It carries out the reaction phosphoenolpyruvate + UDP-N-acetyl-alpha-D-glucosamine = UDP-N-acetyl-3-O-(1-carboxyvinyl)-alpha-D-glucosamine + phosphate. It functions in the pathway cell wall biogenesis; peptidoglycan biosynthesis. Its function is as follows. Cell wall formation. Adds enolpyruvyl to UDP-N-acetylglucosamine. This chain is UDP-N-acetylglucosamine 1-carboxyvinyltransferase, found in Lactobacillus acidophilus (strain ATCC 700396 / NCK56 / N2 / NCFM).